Consider the following 406-residue polypeptide: Vacuole membrane protein 1 (406 aa).

The disordered stretch occupies residues 1 to 22 (MAENGTDCEQRRVGMPKEQNNG). The Cytoplasmic portion of the chain corresponds to 1-42 (MAENGTDCEQRRVGMPKEQNNGSFQDPSFMCNRKRRDREERQ). A helical transmembrane segment spans residues 43–63 (SIVLWRKPLITLQYFILEVLI). Topologically, residues 64 to 76 (NLKEWSVRLWHRR) are extracellular. Residues 77 to 97 (MMVVSVLLLLAVLSVAYYIEG) form a helical membrane-spanning segment. The Cytoplasmic portion of the chain corresponds to 98-110 (EHQQCVQYIEKKC). A helical membrane pass occupies residues 111–131 (LWCAYWVGLGILSSVGLGTGL). The Extracellular segment spans residues 132 to 250 (HTFLLYLGPH…ATRAKLTVQN (119 aa)). The segment at 173–316 (GTEGAISLWT…FVIITFSKHI (144 aa)) is VTT domain. A helical membrane pass occupies residues 251 to 271 (LVQKVGFLGILACASIPNPLF). Over 272 to 273 (DL) the chain is Cytoplasmic. The chain crosses the membrane as a helical span at residues 274–294 (AGITCGHFLVPFWTFFGATLI). The Extracellular segment spans residues 295 to 306 (GKAIIKMHIQKL). Residues 307–327 (FVIITFSKHIVEQMVSLIGVI) form a helical membrane-spanning segment. Residues 328 to 363 (PSIGPSLQKPFQEYLEAQRKKLHHKGDSGTPQSENW) are Cytoplasmic-facing. Residues 364–384 (LSWAFEKLVIIMVFYFILSII) traverse the membrane as a helical segment. Over 385–406 (NSMAQSYAKRVQQKKLSVEKTK) the chain is Extracellular.

This sequence belongs to the VMP1 family.

It is found in the endoplasmic reticulum-Golgi intermediate compartment membrane. The protein resides in the cell membrane. The protein localises to the vacuole membrane. Its subcellular location is the endoplasmic reticulum membrane. It carries out the reaction a 1,2-diacyl-sn-glycero-3-phospho-L-serine(in) = a 1,2-diacyl-sn-glycero-3-phospho-L-serine(out). The catalysed reaction is cholesterol(in) = cholesterol(out). It catalyses the reaction a 1,2-diacyl-sn-glycero-3-phosphocholine(in) = a 1,2-diacyl-sn-glycero-3-phosphocholine(out). The enzyme catalyses a 1,2-diacyl-sn-glycero-3-phosphoethanolamine(in) = a 1,2-diacyl-sn-glycero-3-phosphoethanolamine(out). Functionally, phospholipid scramblase involved in lipid homeostasis and membrane dynamics processes. Has phospholipid scramblase activity toward cholesterol and phosphatidylserine, as well as phosphatidylethanolamine and phosphatidylcholine. Required for autophagosome formation: participates in early stages of autophagosome biogenesis at the endoplasmic reticulum (ER) membrane by reequilibrating the leaflets of the ER as lipids are extracted by atg2 (atg2a or atg2b) to mediate autophagosome assembly. In addition to autophagy, involved in other processes in which phospholipid scramblase activity is required. Modulates ER contacts with lipid droplets, mitochondria and endosomes. This chain is Vacuole membrane protein 1, found in Xenopus laevis (African clawed frog).